A 281-amino-acid chain; its full sequence is Shikimate dehydrogenase (NADP(+)) (281 aa).

Residues 19 to 21 and Thr66 contribute to the shikimate site; that span reads SFS. The active-site Proton acceptor is Lys70. Positions 91 and 104 each coordinate shikimate. Residues 127–131 and Ile223 contribute to the NADP(+) site; that span reads GAGGA. Tyr225 is a binding site for shikimate. Position 246 (Gly246) interacts with NADP(+).

This sequence belongs to the shikimate dehydrogenase family. As to quaternary structure, homodimer.

The catalysed reaction is shikimate + NADP(+) = 3-dehydroshikimate + NADPH + H(+). Its pathway is metabolic intermediate biosynthesis; chorismate biosynthesis; chorismate from D-erythrose 4-phosphate and phosphoenolpyruvate: step 4/7. Its function is as follows. Involved in the biosynthesis of the chorismate, which leads to the biosynthesis of aromatic amino acids. Catalyzes the reversible NADPH linked reduction of 3-dehydroshikimate (DHSA) to yield shikimate (SA). This Methanobrevibacter smithii (strain ATCC 35061 / DSM 861 / OCM 144 / PS) protein is Shikimate dehydrogenase (NADP(+)).